A 224-amino-acid chain; its full sequence is Urease accessory protein UreF (224 aa).

It belongs to the UreF family. In terms of assembly, ureD, UreF and UreG form a complex that acts as a GTP-hydrolysis-dependent molecular chaperone, activating the urease apoprotein by helping to assemble the nickel containing metallocenter of UreC. The UreE protein probably delivers the nickel.

The protein localises to the cytoplasm. Its function is as follows. Required for maturation of urease via the functional incorporation of the urease nickel metallocenter. This Citrobacter koseri (strain ATCC BAA-895 / CDC 4225-83 / SGSC4696) protein is Urease accessory protein UreF.